A 228-amino-acid chain; its full sequence is Phosphoglycolate phosphatase 1 (228 aa).

D8 functions as the Nucleophile in the catalytic mechanism. Residues D8 and D10 each coordinate Mg(2+). Residue K149 participates in substrate binding. Mg(2+)-binding residues include D172 and D176.

This sequence belongs to the archaeal SPP-like hydrolase family. The cofactor is Mg(2+).

The catalysed reaction is 2-phosphoglycolate + H2O = glycolate + phosphate. In terms of biological role, catalyzes the dephosphorylation of 2-phosphoglycolate. The sequence is that of Phosphoglycolate phosphatase 1 from Saccharolobus solfataricus (strain ATCC 35092 / DSM 1617 / JCM 11322 / P2) (Sulfolobus solfataricus).